We begin with the raw amino-acid sequence, 337 residues long: Anthranilate phosphoribosyltransferase (337 aa).

5-phospho-alpha-D-ribose 1-diphosphate is bound by residues Gly80, 83–84, Thr88, 90–93, 108–116, and Ser120; these read GD, NIST, and KHGNRSVSS. Gly80 is an anthranilate binding site. Ser92 contacts Mg(2+). An anthranilate-binding site is contributed by Asn111. Arg166 is an anthranilate binding site. Residues Asp225 and Glu226 each coordinate Mg(2+).

Belongs to the anthranilate phosphoribosyltransferase family. As to quaternary structure, homodimer. Mg(2+) is required as a cofactor.

It carries out the reaction N-(5-phospho-beta-D-ribosyl)anthranilate + diphosphate = 5-phospho-alpha-D-ribose 1-diphosphate + anthranilate. Its pathway is amino-acid biosynthesis; L-tryptophan biosynthesis; L-tryptophan from chorismate: step 2/5. In terms of biological role, catalyzes the transfer of the phosphoribosyl group of 5-phosphorylribose-1-pyrophosphate (PRPP) to anthranilate to yield N-(5'-phosphoribosyl)-anthranilate (PRA). The polypeptide is Anthranilate phosphoribosyltransferase (Syntrophobacter fumaroxidans (strain DSM 10017 / MPOB)).